The sequence spans 394 residues: Ribulose bisphosphate carboxylase large chain (394 aa).

At K5 the chain carries N6,N6,N6-trimethyllysine. 2 residues coordinate substrate: N114 and T164. K166 serves as the catalytic Proton acceptor. Substrate is bound at residue K168. Mg(2+)-binding residues include K192, D194, and E195. The residue at position 192 (K192) is an N6-carboxylysine. H285 serves as the catalytic Proton acceptor. The substrate site is built by R286, H318, and S370.

Belongs to the RuBisCO large chain family. Type I subfamily. Heterohexadecamer of 8 large chains and 8 small chains; disulfide-linked. The disulfide link is formed within the large subunit homodimers. The cofactor is Mg(2+). Post-translationally, the disulfide bond which can form in the large chain dimeric partners within the hexadecamer appears to be associated with oxidative stress and protein turnover.

It localises to the plastid. It is found in the chloroplast. It carries out the reaction 2 (2R)-3-phosphoglycerate + 2 H(+) = D-ribulose 1,5-bisphosphate + CO2 + H2O. The catalysed reaction is D-ribulose 1,5-bisphosphate + O2 = 2-phosphoglycolate + (2R)-3-phosphoglycerate + 2 H(+). In terms of biological role, ruBisCO catalyzes two reactions: the carboxylation of D-ribulose 1,5-bisphosphate, the primary event in carbon dioxide fixation, as well as the oxidative fragmentation of the pentose substrate in the photorespiration process. Both reactions occur simultaneously and in competition at the same active site. The protein is Ribulose bisphosphate carboxylase large chain (rbcL) of Nelumbo lutea (American lotus).